The sequence spans 460 residues: Transcriptional regulatory protein UME1 (460 aa).

Positions 14 to 22 (NEEFKIWKK) match the NEE-box motif. 4 WD repeats span residues 233–271 (PGIK…KPLW), 276–316 (SLDG…ALGD), 339–379 (FYSE…AIYN), and 411–451 (GENN…VLDG).

Component of the RPD3C(L) complex composed of at least ASH1, CTI6, DEP1, PHO23, RPD3, RXT2, RXT3, SAP30, SDS3, SIN3, UME1 and UME6. Component of the RPD3C(S) complex composed of at least EAF3, RCO1, RPD3, SIN3, and UME1. Interacts with RPD3.

It localises to the cytoplasm. Its subcellular location is the nucleus. Its function is as follows. Catalytic component of the RPD3 histone deacetylase complexes RPD3C(L) and RPD3C(S) responsible for the deacetylation of lysine residues on the N-terminal part of the core histones (H2A, H2B, H3 and H4). Histone deacetylation gives a tag for epigenetic repression and plays an important role in transcriptional regulation, cell cycle progression and developmental events. The sequence is that of Transcriptional regulatory protein UME1 (UME1) from Saccharomyces cerevisiae (strain ATCC 204508 / S288c) (Baker's yeast).